The primary structure comprises 1279 residues: Sterol regulatory element-binding protein cleavage-activating protein (1279 aa).

Residues 1 to 18 are Cytoplasmic-facing; sequence MTLTERLREKISRAFYNH. A helical transmembrane segment spans residues 19-39; it reads GLLCASYPIPIILFTGFCILA. The Lumenal portion of the chain corresponds to 40-279; the sequence is CCYPLLKLPL…SLVHVHFKEE (240 aa). The segment at 46–284 is loop-1; that stretch reads KLPLPGTGPV…HFKEEIGVAE (239 aa). A disordered region spans residues 60 to 80; it reads PVKDYSPPPVDSDRKQGEPTE. N-linked (GlcNAc...) asparagine glycosylation is present at Asn263. A helical transmembrane segment spans residues 280–300; it reads IGVAELIPLVTTYIILFAYIY. The 159-residue stretch at 284–442 folds into the SSD domain; the sequence is ELIPLVTTYI…MLFFTTVLSI (159 aa). The Cytoplasmic portion of the chain corresponds to 301 to 312; it reads FSTRKIDMVKSK. A helical transmembrane segment spans residues 313-333; the sequence is WGLALAAVVTVLSSLLMSVGL. Residues 334–344 are Lumenal-facing; the sequence is CTLFGLTPTLN. Residues 345–365 form a helical membrane-spanning segment; the sequence is GGEIFPYLVVVIGLENVLVLT. At 366–401 the chain is on the cytoplasmic side; the sequence is KSVVSTPVDLEVKLRIAQGLSSESWSIMKNMATELG. A helical transmembrane segment spans residues 402-422; that stretch reads IILIGYFTLVPAIQEFCLFAV. Residue Val423 is a topological domain, lumenal. The chain crosses the membrane as a helical span at residues 424–444; sequence GLVSDFFLQMLFFTTVLSIDI. Residues 445-518 are Cytoplasmic-facing; sequence RRMELADLNK…FLARTRLAQR (74 aa). The ER export signal signature appears at 447–452; sequence MELADL. Glycyl lysine isopeptide (Lys-Gly) (interchain with G-Cter in ubiquitin) cross-links involve residues Lys454 and Lys466. A helical membrane pass occupies residues 519–539; sequence LIMAGTVVWIGILVYTDPAGL. Residues 535–710 form a loop-7 region; it reads DPAGLRNYLA…QAHGDVTLYK (176 aa). Over 540–709 the chain is Lumenal; sequence RNYLAAQVTE…VQAHGDVTLY (170 aa). The tract at residues 579–615 is disordered; the sequence is IFPPDAPKLPENQTSPGESPERGGPAEVVHDSPVPEV. Asn590 and Asn641 each carry an N-linked (GlcNAc...) asparagine glycan. The segment at 668–696 is disordered; the sequence is EGRHPQDGRSAWPPPGPIPAGHWEAGPKG. A helical transmembrane segment spans residues 710–730; it reads KVAALGLATGIVLVLLLLCLY. Residues 731-1279 are Cytoplasmic-facing; the sequence is RVLCPRNYGQ…YVPSVLEKLD (549 aa). Residues 731–1279 are interaction with SREBF2; it reads RVLCPRNYGQ…YVPSVLEKLD (549 aa). A WD 1 repeat occupies 771 to 811; the sequence is VLRGHLMDIECLASDGMLLVSCCLAGHVCVWDAQTGDCLTR. Residues 811-904 are disordered; the sequence is RIPRPGRQRR…PRHRAVCGRS (94 aa). Ser822, Ser838, and Ser851 each carry phosphoserine. Residues 877–891 show a composition bias toward polar residues; sequence IDTNFSAQPRSSQPT. 2 positions are modified to phosphoserine: Ser907 and Ser937. The segment at 931 to 962 is disordered; that stretch reads PALRPPSPGPVLSQAPEDEGGSPEKGSPSLAW. 2 WD repeats span residues 952–1002 and 1005–1042; these read SPEK…LCCS and EVSS…ALSP. Position 1051 is an omega-N-methylarginine (Arg1051). WD repeat units follow at residues 1077 to 1114, 1117 to 1155, 1158 to 1195, and 1197 to 1235; these read AHQK…CLFT, GHSG…RVSH, AHRG…KFYS, and QQDL…LLQT.

Belongs to the WD repeat SCAP family. In terms of assembly, membrane region forms a homotetramer. Component of the SCAP-SREBP complex (composed of SCAP and SREBF1/SREBP1 or SREBF2/SREBP2); interacts with SREBF1/SREBP1 or SREBF2/SREBP2 through its C-terminal cytoplasmic domain. Forms a ternary complex with INSIG1 or INSIG2 through its transmembrane domains at high sterol concentrations. Interacts with PAQR3; the interaction anchors the SCAP-SREBP complex to the Golgi apparatus in low cholesterol conditions. Interacts with the SEC23-SEC24 complex in a SAR1-GTP-dependent manner through an ER export signal in its third cytoplasmic loop. Interacts with RNF139; the interaction inhibits the interaction of SCAP with SEC24B and hampering the ER to Golgi transport of the SCAP-SREBP complex. Interacts with SPRING1. Ubiquitinated at Lys-454 and Lys-466. RNF145 triggers ubiquitination of SCAP, likely inhibiting SCAP-SREBP complex transport to the Golgi apparatus and the subsequent processing/maturation of SREBF2/SREBP2.

Its subcellular location is the endoplasmic reticulum membrane. The protein localises to the golgi apparatus membrane. The protein resides in the cytoplasmic vesicle. It is found in the COPII-coated vesicle membrane. Functionally, escort protein required for cholesterol as well as lipid homeostasis. Regulates export of the SCAP-SREBP complex from the endoplasmic reticulum to the Golgi upon low cholesterol, thereby regulating the processing of sterol regulatory element-binding proteins (SREBPs) SREBF1/SREBP1 and SREBF2/SREBP2. At high sterol concentrations, formation of a ternary complex with INSIG (INSIG1 or INSIG2) leads to mask the ER export signal in SCAP, promoting retention of the complex in the endoplasmic reticulum. Low sterol concentrations trigger release of INSIG, a conformational change in the SSD domain of SCAP, unmasking of the ER export signal, promoting recruitment into COPII-coated vesicles and transport of the SCAP-SREBP to the Golgi: in the Golgi, SREBPs are then processed, releasing the transcription factor fragment of SREBPs from the membrane, its import into the nucleus and up-regulation of LDLR, INSIG1 and the mevalonate pathway. Binds cholesterol via its SSD domain. The polypeptide is Sterol regulatory element-binding protein cleavage-activating protein (Homo sapiens (Human)).